The chain runs to 305 residues: DNA-directed RNA polymerase 35 kDa subunit (305 aa).

Belongs to the poxviridae DNA-directed RNA polymerase 35 kDa subunit family. In terms of assembly, the DNA-dependent RNA polymerase used for intermediate and late genes expression consists of eight subunits 147 kDa, 133 kDa, 35 kDa, 30 kDa, 22 kDa, 19 kDa, 18 kDa and 7 kDa totalling more than 500 kDa in mass. The same holoenzyme, with the addition of the transcription-specificity factor RAP94, is used for early gene expression.

Its subcellular location is the virion. It catalyses the reaction RNA(n) + a ribonucleoside 5'-triphosphate = RNA(n+1) + diphosphate. Its function is as follows. Part of the DNA-dependent RNA polymerase which catalyzes the transcription of viral DNA into RNA using the four ribonucleoside triphosphates as substrates. Responsible for the transcription of early, intermediate and late genes. DNA-dependent RNA polymerase associates with the early transcription factor (ETF), itself composed of D6 and A7, thereby allowing the early genes transcription. Late transcription, and probably also intermediate transcription, require newly synthesized RNA polymerase. The protein is DNA-directed RNA polymerase 35 kDa subunit (OPG156) of Variola virus (isolate Human/India/Ind3/1967) (VARV).